A 91-amino-acid polypeptide reads, in one-letter code: Large ribosomal subunit protein uL23c (91 aa).

Belongs to the universal ribosomal protein uL23 family. In terms of assembly, part of the 50S ribosomal subunit.

It is found in the plastid. The protein localises to the chloroplast. Binds to 23S rRNA. This Huperzia lucidula (Shining clubmoss) protein is Large ribosomal subunit protein uL23c (rpl23).